A 347-amino-acid polypeptide reads, in one-letter code: Ketol-acid reductoisomerase (NADP(+)) (347 aa).

The KARI N-terminal Rossmann domain occupies 1-185 (MKIYYDEDAN…GGTRAGVLET (185 aa)). NADP(+)-binding positions include 24–27 (YGSQ), Arg47, Ser50, Ser52, and 82–85 (DEFQ). His107 is an active-site residue. Gly133 contacts NADP(+). In terms of domain architecture, KARI C-terminal knotted spans 186–336 (SFKEETETDL…AELRSKMKFL (151 aa)). The Mg(2+) site is built by Asp194, Glu198, Glu230, and Glu234. Ser255 serves as a coordination point for substrate.

Belongs to the ketol-acid reductoisomerase family. Mg(2+) serves as cofactor.

The enzyme catalyses (2R)-2,3-dihydroxy-3-methylbutanoate + NADP(+) = (2S)-2-acetolactate + NADPH + H(+). The catalysed reaction is (2R,3R)-2,3-dihydroxy-3-methylpentanoate + NADP(+) = (S)-2-ethyl-2-hydroxy-3-oxobutanoate + NADPH + H(+). It participates in amino-acid biosynthesis; L-isoleucine biosynthesis; L-isoleucine from 2-oxobutanoate: step 2/4. It functions in the pathway amino-acid biosynthesis; L-valine biosynthesis; L-valine from pyruvate: step 2/4. Its function is as follows. Involved in the biosynthesis of branched-chain amino acids (BCAA). Catalyzes an alkyl-migration followed by a ketol-acid reduction of (S)-2-acetolactate (S2AL) to yield (R)-2,3-dihydroxy-isovalerate. In the isomerase reaction, S2AL is rearranged via a Mg-dependent methyl migration to produce 3-hydroxy-3-methyl-2-ketobutyrate (HMKB). In the reductase reaction, this 2-ketoacid undergoes a metal-dependent reduction by NADPH to yield (R)-2,3-dihydroxy-isovalerate. The sequence is that of Ketol-acid reductoisomerase (NADP(+)) from Gamma-proteobacterium EBAC31A08.